The sequence spans 303 residues: Mitochondrial carrier homolog 2 (303 aa).

The residue at position 2 (Ala2) is an N-acetylalanine. Residues 2–15 (ADAASQVLLGSGLT) are Mitochondrial intermembrane-facing. Solcar repeat units follow at residues 2-98 (ADAA…YQES) and 118-206 (DRVI…INTY). The chain crosses the membrane as a helical span at residues 16–36 (ILSQPLMYVKVLIQVGYEPLP). The Cytoplasmic segment spans residues 37-77 (PTIGRNIFGRQVCQLPGLFCYAQHIASIDGRRGLFTGLTPR). Residues 78 to 92 (LCSGVLGTVVHGKVL) traverse the membrane as a helical segment. Residues 93 to 135 (QYYQESEKPEELGSVTVQKEYSSSFDRVIKETTREMIARSAAT) are Mitochondrial intermembrane-facing. The helical transmembrane segment at 136 to 156 (LITHPFHVITLRSMVQFIGRE) threads the bilayer. Over 157 to 180 (SKYCGLCDSIVTIYREEGIVGFFA) the chain is Cytoplasmic. Residues 181–199 (GLIPRLLGDIISLWLCNSL) traverse the membrane as a helical segment. Over 200–231 (AYLINTYALDSGVSTMNEMKSYSQAVTGFFAS) the chain is Mitochondrial intermembrane. A helical membrane pass occupies residues 232–252 (MLTYPFVLVSNLMAVNNCGLA). Residues 253–280 (GGSPPYSPIYTSWIDCWCMLQKAGNMSR) lie on the Cytoplasmic side of the membrane. Residues 281–303 (GNSLFFRKVPCGKTYCYDLRMLI) traverse the membrane as a helical segment.

Belongs to the mitochondrial carrier (TC 2.A.29) family. As to quaternary structure, interacts with p15BID. Expressed in a wide variety of tissues. Predominant expressed in liver, kidney, heart, skeletal muscle and testis.

Its subcellular location is the mitochondrion outer membrane. Functionally, protein insertase that mediates insertion of transmembrane proteins into the mitochondrial outer membrane. Catalyzes insertion of proteins with alpha-helical transmembrane regions, such as signal-anchored, tail-anchored and multi-pass membrane proteins. Does not mediate insertion of beta-barrel transmembrane proteins. Also acts as a receptor for the truncated form of pro-apoptotic BH3-interacting domain death agonist (p15 BID) and has therefore a critical function in apoptosis. Regulates the quiescence/cycling of hematopoietic stem cells (HSCs). Acts as a regulator of mitochondrial fusion, essential for the naive-to-primed interconversion of embryonic stem cells (ESCs). Acts as a regulator of lipid homeostasis and has a regulatory role in adipocyte differentiation and biology. The sequence is that of Mitochondrial carrier homolog 2 from Mus musculus (Mouse).